Here is a 147-residue protein sequence, read N- to C-terminus: Large ribosomal subunit protein bL9 (147 aa).

It belongs to the bacterial ribosomal protein bL9 family.

Binds to the 23S rRNA. The polypeptide is Large ribosomal subunit protein bL9 (Clostridium tetani (strain Massachusetts / E88)).